The sequence spans 245 residues: Ribonuclease 3 (245 aa).

One can recognise an RNase III domain in the interval 17–146 (FTDKMKSLGL…FVGALYLDQG (130 aa)). Glutamate 59 provides a ligand contact to Mg(2+). Aspartate 63 is a catalytic residue. Residues aspartate 132 and glutamate 135 each coordinate Mg(2+). Glutamate 135 is an active-site residue. The 70-residue stretch at 172-241 (DFKTQFQEYV…AEQAYKLMKN (70 aa)) folds into the DRBM domain.

This sequence belongs to the ribonuclease III family. Homodimer. It depends on Mg(2+) as a cofactor.

It is found in the cytoplasm. It catalyses the reaction Endonucleolytic cleavage to 5'-phosphomonoester.. Its function is as follows. Digests double-stranded RNA. Involved in the processing of primary rRNA transcript to yield the immediate precursors to the large and small rRNAs (23S and 16S). Processes some mRNAs, and tRNAs when they are encoded in the rRNA operon. Processes pre-crRNA and tracrRNA of type II CRISPR loci if present in the organism. The polypeptide is Ribonuclease 3 (Staphylococcus epidermidis (strain ATCC 12228 / FDA PCI 1200)).